The following is a 159-amino-acid chain: U1 small nuclear ribonucleoprotein C (159 aa).

The segment at 4–36 (FYCDYCDTYLTHDSPSVRKTHCSGRKHKENVKD) adopts a Matrin-type zinc-finger fold. Disordered stretches follow at residues 63 to 95 (PPTP…MPAP) and 139 to 159 (MRPP…RPDR). Over residues 77–95 (IPPPPSMGGPPRPGMMPAP) the composition is skewed to pro residues.

Belongs to the U1 small nuclear ribonucleoprotein C family. In terms of assembly, component of the U1 snRNP. The U1 snRNP is composed of the U1 snRNA and the 7 core Sm proteins snrpb, snrpd1, snrpd2, snrpd3, snrpe, snrpf and snrpg that assemble in a heptameric protein ring on the Sm site of the small nuclear RNA to form the core snRNP, and at least 3 U1 snRNP-specific proteins snrnp70/U1-70K, snrpa/U1-A and snrpc/U1-C. snrpc/U1-C interacts with U1 snRNA and the 5' splice-site region of the pre-mRNA.

The protein localises to the nucleus. Functionally, component of the spliceosomal U1 snRNP, which is essential for recognition of the pre-mRNA 5' splice-site and the subsequent assembly of the spliceosome. snrpc/U1-C is directly involved in initial 5' splice-site recognition for both constitutive and regulated alternative splicing. The interaction with the 5' splice-site seems to precede base-pairing between the pre-mRNA and the U1 snRNA. Stimulates commitment or early (E) complex formation by stabilizing the base pairing of the 5' end of the U1 snRNA and the 5' splice-site region. The sequence is that of U1 small nuclear ribonucleoprotein C from Xenopus tropicalis (Western clawed frog).